A 261-amino-acid chain; its full sequence is Antiviral protein S (261 aa).

2 disulfides stabilise this stretch: C34-C258 and C84-C105. E175 is an active-site residue.

It belongs to the ribosome-inactivating protein family. Type 1 RIP subfamily.

It carries out the reaction Endohydrolysis of the N-glycosidic bond at one specific adenosine on the 28S rRNA.. Its function is as follows. Inhibits viral infection of plants, and protein synthesis in vitro. This is Antiviral protein S from Phytolacca americana (American pokeweed).